The chain runs to 447 residues: uncharacterized protein (447 aa).

Helical transmembrane passes span 28–48, 241–261, and 397–417; these read IVIV…YPAV, IDAS…YYAI, and PFVL…LSIF.

The protein localises to the membrane. This is an uncharacterized protein from Schizosaccharomyces pombe (strain 972 / ATCC 24843) (Fission yeast).